The primary structure comprises 376 residues: Lipoprotein p33 (376 aa).

The first 30 residues, 1 to 30 (MKIKKIKLLKALALTGAFGIVATVPVIVSS), serve as a signal peptide directing secretion. The N-palmitoyl cysteine moiety is linked to residue C31. C31 carries S-diacylglycerol cysteine lipidation. The tract at residues 33 to 59 (STDNNGGTGDNNTGGGGSGTDQQQGTT) is disordered. Residues 38–51 (GGTGDNNTGGGGSG) show a composition bias toward gly residues.

This sequence belongs to the p35 lipoprotein family.

The protein resides in the cell membrane. The protein is Lipoprotein p33 of Malacoplasma penetrans (strain HF-2) (Mycoplasma penetrans).